The sequence spans 186 residues: Cell division protein SepF (186 aa).

Positions 24-91 (EDEEEEERYA…HNPPHLRAVP (68 aa)) are disordered.

The protein belongs to the SepF family. Homodimer. Interacts with FtsZ.

The protein localises to the cytoplasm. Cell division protein that is part of the divisome complex and is recruited early to the Z-ring. Probably stimulates Z-ring formation, perhaps through the cross-linking of FtsZ protofilaments. Its function overlaps with FtsA. The chain is Cell division protein SepF from Rubrobacter xylanophilus (strain DSM 9941 / JCM 11954 / NBRC 16129 / PRD-1).